The chain runs to 419 residues: UDP-N-acetylmuramoylalanine--D-glutamate ligase (419 aa).

An ATP-binding site is contributed by 109 to 115 (GSAGKTT).

It belongs to the MurCDEF family.

Its subcellular location is the cytoplasm. It catalyses the reaction UDP-N-acetyl-alpha-D-muramoyl-L-alanine + D-glutamate + ATP = UDP-N-acetyl-alpha-D-muramoyl-L-alanyl-D-glutamate + ADP + phosphate + H(+). Its pathway is cell wall biogenesis; peptidoglycan biosynthesis. In terms of biological role, cell wall formation. Catalyzes the addition of glutamate to the nucleotide precursor UDP-N-acetylmuramoyl-L-alanine (UMA). This Chlamydia caviae (strain ATCC VR-813 / DSM 19441 / 03DC25 / GPIC) (Chlamydophila caviae) protein is UDP-N-acetylmuramoylalanine--D-glutamate ligase.